A 177-amino-acid chain; its full sequence is Non-specific lipid transfer protein GPI-anchored 22 (177 aa).

Positions 1–29 (MARFMAYNQNPQMLALCITVAVMFLGVRS) are cleaved as a signal peptide. Cystine bridges form between C38/C81, C48/C63, C64/C108, and C79/C117. The N-linked (GlcNAc...) asparagine glycan is linked to N113. S152 carries the GPI-anchor amidated serine lipid modification. The propeptide at 153–177 (SSIKGRDNKQFGLMMAGALSIWYIM) is removed in mature form.

It belongs to the plant LTP family. Expressed in seedlings, preferentially in hypocotyls and roots. Also observed in siliques.

It is found in the cell membrane. Probable lipid transfer protein. The polypeptide is Non-specific lipid transfer protein GPI-anchored 22 (Arabidopsis thaliana (Mouse-ear cress)).